We begin with the raw amino-acid sequence, 395 residues long: NADH-quinone oxidoreductase subunit D (395 aa).

It belongs to the complex I 49 kDa subunit family. NDH-1 is composed of 14 different subunits. Subunits NuoB, C, D, E, F, and G constitute the peripheral sector of the complex.

The protein localises to the cell inner membrane. It carries out the reaction a quinone + NADH + 5 H(+)(in) = a quinol + NAD(+) + 4 H(+)(out). In terms of biological role, NDH-1 shuttles electrons from NADH, via FMN and iron-sulfur (Fe-S) centers, to quinones in the respiratory chain. The immediate electron acceptor for the enzyme in this species is believed to be ubiquinone. Couples the redox reaction to proton translocation (for every two electrons transferred, four hydrogen ions are translocated across the cytoplasmic membrane), and thus conserves the redox energy in a proton gradient. This is NADH-quinone oxidoreductase subunit D from Anaplasma phagocytophilum (strain HZ).